A 217-amino-acid chain; its full sequence is Adenylate kinase (217 aa).

G11 to T16 contacts ATP. The tract at residues S31–V60 is NMP. Residues T32, R37, D58–V60, G86–R89, and Q93 contribute to the AMP site. Residues A127 to D165 form an LID region. R128 provides a ligand contact to ATP. The Zn(2+) site is built by C131 and C134. T137 to Y138 lines the ATP pocket. The Zn(2+) site is built by C151 and C154. Positions 162 and 173 each coordinate AMP. Q201 provides a ligand contact to ATP.

The protein belongs to the adenylate kinase family. Monomer.

Its subcellular location is the cytoplasm. It carries out the reaction AMP + ATP = 2 ADP. The protein operates within purine metabolism; AMP biosynthesis via salvage pathway; AMP from ADP: step 1/1. Catalyzes the reversible transfer of the terminal phosphate group between ATP and AMP. Plays an important role in cellular energy homeostasis and in adenine nucleotide metabolism. This is Adenylate kinase from Lactobacillus delbrueckii subsp. bulgaricus (strain ATCC 11842 / DSM 20081 / BCRC 10696 / JCM 1002 / NBRC 13953 / NCIMB 11778 / NCTC 12712 / WDCM 00102 / Lb 14).